We begin with the raw amino-acid sequence, 398 residues long: Serpin-Z2A (398 aa).

The tract at residues 343–367 (GTEAAAATIAKAVLLSASPPSDMDF) is RCL.

It belongs to the serpin family.

Functionally, inhibits chymotrypsin and cathepsin G in vitro. This Triticum aestivum (Wheat) protein is Serpin-Z2A.